A 575-amino-acid polypeptide reads, in one-letter code: Chaperonin CPN60-1, mitochondrial (575 aa).

Residues 1 to 32 (MHRFATGLASKARLARNGANQIASRSNWRRNY) constitute a mitochondrion transit peptide.

It belongs to the chaperonin (HSP60) family.

The protein resides in the mitochondrion. In terms of biological role, implicated in mitochondrial protein import and macromolecular assembly. May facilitate the correct folding of imported proteins. May also prevent misfolding and promote the refolding and proper assembly of unfolded polypeptides generated under stress conditions in the mitochondrial matrix. This Cucurbita maxima (Pumpkin) protein is Chaperonin CPN60-1, mitochondrial (CPN60-1).